The primary structure comprises 249 residues: DNA polymerase sliding clamp (249 aa).

It belongs to the PCNA family. Homotrimer. The subunits circularize to form a toroid; DNA passes through its center. Replication factor C (RFC) is required to load the toroid on the DNA.

Functionally, sliding clamp subunit that acts as a moving platform for DNA processing. Responsible for tethering the catalytic subunit of DNA polymerase and other proteins to DNA during high-speed replication. The polypeptide is DNA polymerase sliding clamp (Nanoarchaeum equitans (strain Kin4-M)).